The sequence spans 314 residues: Homoserine O-acetyltransferase (314 aa).

Residue C142 is the Acyl-thioester intermediate of the active site. Substrate contacts are provided by K163 and S192. Catalysis depends on H235, which acts as the Proton acceptor. The active site involves E237. Residue R249 participates in substrate binding.

Belongs to the MetA family.

The protein localises to the cytoplasm. It catalyses the reaction L-homoserine + acetyl-CoA = O-acetyl-L-homoserine + CoA. It participates in amino-acid biosynthesis; L-methionine biosynthesis via de novo pathway; O-acetyl-L-homoserine from L-homoserine: step 1/1. Its function is as follows. Transfers an acetyl group from acetyl-CoA to L-homoserine, forming acetyl-L-homoserine. This Streptococcus pneumoniae (strain JJA) protein is Homoserine O-acetyltransferase.